A 210-amino-acid polypeptide reads, in one-letter code: Small heat shock protein hspG6 (210 aa).

The 177-residue stretch at 34–210 folds into the sHSP domain; the sequence is KTIIDKLPPM…YSNTIKININ (177 aa). The segment at 93 to 151 is disordered; sequence VIEKSTSSSTLDSKEDEPSIEEFEDDIKPKSKSDNTTVSTTTTATTKENKEDENKTKST. The span at 126-138 shows a compositional bias: low complexity; that stretch reads DNTTVSTTTTATT. Over residues 139 to 151 the composition is skewed to basic and acidic residues; the sequence is KENKEDENKTKST.

It belongs to the small heat shock protein (HSP20) family.

The sequence is that of Small heat shock protein hspG6 (hspG6) from Dictyostelium discoideum (Social amoeba).